The chain runs to 155 residues: Photosystem I reaction center subunit XI (155 aa).

2 consecutive transmembrane segments (helical) span residues 80-102 (LISG…LVSF) and 117-139 (GWSQ…AFFL).

This sequence belongs to the PsaL family.

It localises to the cellular thylakoid membrane. This chain is Photosystem I reaction center subunit XI, found in Thermosynechococcus vestitus (strain NIES-2133 / IAM M-273 / BP-1).